A 548-amino-acid chain; its full sequence is Non-structural protein NS1 (548 aa).

The protein belongs to the orbivirus non-structural protein NS1 family.

In Camelus dromedarius (Dromedary), this protein is Non-structural protein NS1 (Segment-5).